The chain runs to 533 residues: DNA-directed RNA polymerase III subunit RPC3 (533 aa).

The disordered stretch occupies residues Leu162–Val181. Ser194 bears the Phosphoserine mark. Positions Gly197–Pro228 are disordered. The span at Gly211–Ser227 shows a compositional bias: basic and acidic residues.

It belongs to the eukaryotic RPC3/POLR3C RNA polymerase subunit family. In terms of assembly, component of the RNA polymerase III complex consisting of 17 subunits: a ten-subunit horseshoe-shaped catalytic core composed of POLR3A/RPC1, POLR3B/RPC2, POLR1C/RPAC1, POLR1D/RPAC2, POLR3K/RPC10, POLR2E/RPABC1, POLR2F/RPABC2, POLR2H/RPABC3, POLR2K/RPABC4 and POLR2L/RPABC5; a mobile stalk composed of two subunits POLR3H/RPC8 and CRCP/RPC9, protruding from the core and functioning primarily in transcription initiation; and additional subunits homologous to general transcription factors of the RNA polymerase II machinery, POLR3C/RPC3-POLR3F/RPC6-POLR3G/RPC7 heterotrimer required for transcription initiation and POLR3D/RPC4-POLR3E/RPC5 heterodimer involved in both transcription initiation and termination. Directly interacts with POLR3G/RPC7 and POLR3GL. Directly interacts with POLR3F/RPC6. Interacts with GTF3C4. As part of the RNA polymerase III complex, interacts with PKP2.

The protein localises to the nucleus. Functionally, DNA-dependent RNA polymerase catalyzes the transcription of DNA into RNA using the four ribonucleoside triphosphates as substrates. Specific peripheric component of RNA polymerase III (Pol III) which synthesizes small non-coding RNAs including 5S rRNA, snRNAs, tRNAs and miRNAs from at least 500 distinct genomic loci. Part of POLR3C/RPC3-POLR3F/RPC6-POLR3G/RPC7 heterotrimer, coordinates the dynamics of Pol III stalk and clamp modules during the transition from apo to elongation state. Pol III plays a key role in sensing and limiting infection by intracellular bacteria and DNA viruses. Acts as a nuclear and cytosolic DNA sensor involved in innate immune response. Can sense non-self dsDNA that serves as template for transcription into dsRNA. The non-self RNA polymerase III transcripts, such as Epstein-Barr virus-encoded RNAs (EBERs) induce type I interferon and NF-kappa-B through the RIG-I pathway. Preferentially binds single-stranded DNA (ssDNA) in a sequence-independent manner. In Mus musculus (Mouse), this protein is DNA-directed RNA polymerase III subunit RPC3.